The following is a 289-amino-acid chain: Digeranylgeranylglyceryl phosphate synthase (289 aa).

8 consecutive transmembrane segments (helical) span residues 17–37 (CLMA…ILTS), 50–70 (LFSS…GNAI), 106–126 (FALG…IALF), 141–161 (TPLL…LFGA), 163–183 (VFGL…ALAI), 221–241 (LIGF…MLGL), 243–263 (YLYL…QLLA), and 269–289 (KSSK…IAGV).

This sequence belongs to the UbiA prenyltransferase family. DGGGP synthase subfamily. Requires Mg(2+) as cofactor.

The protein localises to the cell membrane. It catalyses the reaction sn-3-O-(geranylgeranyl)glycerol 1-phosphate + (2E,6E,10E)-geranylgeranyl diphosphate = 2,3-bis-O-(geranylgeranyl)-sn-glycerol 1-phosphate + diphosphate. It participates in membrane lipid metabolism; glycerophospholipid metabolism. Its function is as follows. Prenyltransferase that catalyzes the transfer of the geranylgeranyl moiety of geranylgeranyl diphosphate (GGPP) to the C2 hydroxyl of (S)-3-O-geranylgeranylglyceryl phosphate (GGGP). This reaction is the second ether-bond-formation step in the biosynthesis of archaeal membrane lipids. The protein is Digeranylgeranylglyceryl phosphate synthase of Methanosarcina barkeri (strain Fusaro / DSM 804).